The sequence spans 80 residues: Exodeoxyribonuclease 7 small subunit (80 aa).

It belongs to the XseB family. As to quaternary structure, heterooligomer composed of large and small subunits.

Its subcellular location is the cytoplasm. It carries out the reaction Exonucleolytic cleavage in either 5'- to 3'- or 3'- to 5'-direction to yield nucleoside 5'-phosphates.. In terms of biological role, bidirectionally degrades single-stranded DNA into large acid-insoluble oligonucleotides, which are then degraded further into small acid-soluble oligonucleotides. The polypeptide is Exodeoxyribonuclease 7 small subunit (Shigella sonnei (strain Ss046)).